Consider the following 81-residue polypeptide: Teretoxin Tsu6.8 (81 aa).

The N-terminal stretch at 1 to 21 (MATSGRLLCLCLVLGLIFESL) is a signal peptide. Residues 22 to 45 (GHPVMGEKRAGENASPSARSLPKR) constitute a propeptide that is removed on maturation.

Belongs to the teretoxin M (TM) superfamily. Post-translationally, contains 3 disulfide bonds. As to expression, expressed by the venom duct.

It is found in the secreted. The chain is Teretoxin Tsu6.8 from Terebra subulata (Chocolate spotted auger).